The chain runs to 83 residues: Sulfur carrier protein TusA (83 aa).

Cys-19 functions as the Cysteine persulfide intermediate in the catalytic mechanism.

The protein belongs to the sulfur carrier protein TusA family.

The protein resides in the cytoplasm. Its function is as follows. Sulfur carrier protein which probably makes part of a sulfur-relay system. This chain is Sulfur carrier protein TusA, found in Vibrio atlanticus (strain LGP32) (Vibrio splendidus (strain Mel32)).